We begin with the raw amino-acid sequence, 445 residues long: ATP-dependent protease ATPase subunit HslU (445 aa).

ATP is bound by residues Val-18, 60–65 (GVGKTE), Asp-254, Glu-319, and Arg-391.

It belongs to the ClpX chaperone family. HslU subfamily. A double ring-shaped homohexamer of HslV is capped on each side by a ring-shaped HslU homohexamer. The assembly of the HslU/HslV complex is dependent on binding of ATP.

The protein localises to the cytoplasm. ATPase subunit of a proteasome-like degradation complex; this subunit has chaperone activity. The binding of ATP and its subsequent hydrolysis by HslU are essential for unfolding of protein substrates subsequently hydrolyzed by HslV. HslU recognizes the N-terminal part of its protein substrates and unfolds these before they are guided to HslV for hydrolysis. The polypeptide is ATP-dependent protease ATPase subunit HslU (Alcanivorax borkumensis (strain ATCC 700651 / DSM 11573 / NCIMB 13689 / SK2)).